Here is a 183-residue protein sequence, read N- to C-terminus: Tetrahydromethanopterin S-methyltransferase subunit A 2 (183 aa).

Topologically, residues 1–101 (MFLMVEKKPV…TMKALHSNGV (101 aa)) are cytoplasmic. His-87 lines the 5-hydroxybenzimidazolylcob(I)amide pocket. A helical membrane pass occupies residues 102-118 (DLETGRIIGATGAIPYI). Residues 119-183 (ENMPEEAIER…IGKGDSEENT (65 aa)) are Extracellular-facing.

It belongs to the MtrA family. In terms of assembly, the complex is composed of 8 subunits; MtrA, MtrB, MtrC, MtrD, MtrE, MtrF, MtrG and MtrH. The cofactor is 5-hydroxybenzimidazolylcob(I)amide.

The protein resides in the cell membrane. The enzyme catalyses 5-methyl-5,6,7,8-tetrahydromethanopterin + coenzyme M + 2 Na(+)(in) = 5,6,7,8-tetrahydromethanopterin + methyl-coenzyme M + 2 Na(+)(out). It participates in one-carbon metabolism; methanogenesis from CO(2); methyl-coenzyme M from 5,10-methylene-5,6,7,8-tetrahydromethanopterin: step 2/2. Part of a complex that catalyzes the formation of methyl-coenzyme M and tetrahydromethanopterin from coenzyme M and methyl-tetrahydromethanopterin. This is an energy-conserving, sodium-ion translocating step. The protein is Tetrahydromethanopterin S-methyltransferase subunit A 2 of Methanothermobacter thermautotrophicus (strain ATCC 29096 / DSM 1053 / JCM 10044 / NBRC 100330 / Delta H) (Methanobacterium thermoautotrophicum).